The primary structure comprises 158 residues: 18.2 kDa class I heat shock protein (158 aa).

One can recognise a sHSP domain in the interval 44–158 (ENSAFVSTRV…PEVKTIDISG (115 aa)).

Belongs to the small heat shock protein (HSP20) family. Forms oligomeric structures.

The protein localises to the cytoplasm. The chain is 18.2 kDa class I heat shock protein (HSP18.2) from Medicago sativa (Alfalfa).